The following is an 810-amino-acid chain: DNA gyrase subunit A (810 aa).

Residues 36–502 enclose the Topo IIA-type catalytic domain; it reads LPDVRDGLKP…EVLKTSMSDL (467 aa). The active-site O-(5'-phospho-DNA)-tyrosine intermediate is the Tyr-124. The segment at 499–810 is C-terminal domain; sequence MSDLMQKENI…SLVSVSKFIK (312 aa). The GyrA-box signature appears at 529–535; sequence QGTGGKG.

The protein belongs to the type II topoisomerase GyrA/ParC subunit family. Heterotetramer, composed of two GyrA and two GyrB chains. In the heterotetramer, GyrA contains the active site tyrosine that forms a transient covalent intermediate with DNA, while GyrB binds cofactors and catalyzes ATP hydrolysis.

The protein resides in the cytoplasm. It catalyses the reaction ATP-dependent breakage, passage and rejoining of double-stranded DNA.. Its function is as follows. A type II topoisomerase that negatively supercoils closed circular double-stranded (ds) DNA in an ATP-dependent manner to modulate DNA topology and maintain chromosomes in an underwound state. Negative supercoiling favors strand separation, and DNA replication, transcription, recombination and repair, all of which involve strand separation. Also able to catalyze the interconversion of other topological isomers of dsDNA rings, including catenanes and knotted rings. Type II topoisomerases break and join 2 DNA strands simultaneously in an ATP-dependent manner. This is DNA gyrase subunit A from Borreliella burgdorferi (strain ATCC 35210 / DSM 4680 / CIP 102532 / B31) (Borrelia burgdorferi).